The following is a 398-amino-acid chain: Acetate kinase (398 aa).

Residue asparagine 8 coordinates Mg(2+). Lysine 15 serves as a coordination point for ATP. Arginine 89 is a substrate binding site. The Proton donor/acceptor role is filled by aspartate 146. ATP contacts are provided by residues 206–210 (HIGNG), 283–285 (DMR), and 331–335 (GMGEN). Glutamate 383 provides a ligand contact to Mg(2+).

Belongs to the acetokinase family. In terms of assembly, homodimer. Mg(2+) is required as a cofactor. Requires Mn(2+) as cofactor.

It is found in the cytoplasm. It carries out the reaction acetate + ATP = acetyl phosphate + ADP. It participates in metabolic intermediate biosynthesis; acetyl-CoA biosynthesis; acetyl-CoA from acetate: step 1/2. In terms of biological role, catalyzes the formation of acetyl phosphate from acetate and ATP. Can also catalyze the reverse reaction. This Streptococcus pyogenes serotype M28 (strain MGAS6180) protein is Acetate kinase.